The sequence spans 369 residues: Ferredoxin--NADP reductase 2 (369 aa).

Residues 1 to 21 (MDLSIPNPVADATRQVEGGSP) form a disordered region. FAD contacts are provided by D58, Q66, Y71, V111, F146, D311, and T352.

This sequence belongs to the ferredoxin--NADP reductase type 2 family. As to quaternary structure, homodimer. FAD is required as a cofactor.

The catalysed reaction is 2 reduced [2Fe-2S]-[ferredoxin] + NADP(+) + H(+) = 2 oxidized [2Fe-2S]-[ferredoxin] + NADPH. The sequence is that of Ferredoxin--NADP reductase 2 from Cupriavidus taiwanensis (strain DSM 17343 / BCRC 17206 / CCUG 44338 / CIP 107171 / LMG 19424 / R1) (Ralstonia taiwanensis (strain LMG 19424)).